Consider the following 237-residue polypeptide: Large ribosomal subunit protein uL1 (237 aa).

The protein belongs to the universal ribosomal protein uL1 family. As to quaternary structure, part of the 50S ribosomal subunit.

Functionally, binds directly to 23S rRNA. The L1 stalk is quite mobile in the ribosome, and is involved in E site tRNA release. Its function is as follows. Protein L1 is also a translational repressor protein, it controls the translation of the L11 operon by binding to its mRNA. This is Large ribosomal subunit protein uL1 from Nocardia farcinica (strain IFM 10152).